Consider the following 2102-residue polypeptide: Probable serine/threonine-protein kinase DDB_G0272282 (2102 aa).

A PX domain is found at 1–118; sequence MKYQLSILGD…NWLVPQNEPA (118 aa). The PH domain occupies 124–222; sequence NPDKSGYLIK…WIKAIELSQQ (99 aa). The segment covering 225–240 has biased composition (basic and acidic residues); the sequence is QDQEQYRKQEEEERQK. 9 disordered regions span residues 225 to 289, 302 to 390, 426 to 558, 574 to 665, 685 to 768, 804 to 842, 1029 to 1051, 1106 to 1224, and 1476 to 1514; these read QDQE…SDGS, GPNN…SDLN, EQPG…SASP, SNLP…PLPN, NNNS…NNSL, KKKE…GTLR, QQQQ…SSVN, GTPT…PQPQ, and SSKV…SSLT. Low complexity-rich tracts occupy residues 256–281 and 304–327; these read STLT…LPSS and NNSN…NNHN. The segment covering 328–348 has biased composition (basic residues); it reads HYNHHNNNHNNSHHHHHHHNG. Composition is skewed to low complexity over residues 353 to 376 and 426 to 437; these read SSQV…STSL and EQPGSYQQPQHQ. Positions 438–450 are enriched in gly residues; that stretch reads QGGGGGGGGGGGN. The span at 466–484 shows a compositional bias: low complexity; that stretch reads SNLSSRSNSNSSGSSSGSG. Positions 485–501 are enriched in gly residues; the sequence is SSSGSGPIGSGGVGGGL. Low complexity-rich tracts occupy residues 535 to 558 and 587 to 626; these read SNSS…SASP and NANN…NNGN. Residues 627–659 show a composition bias toward polar residues; sequence TASGSSCNTTPNLLPAPTNVSPIQNRARSSPMT. A compositionally biased stretch (basic and acidic residues) spans 804-824; that stretch reads KKKEKDKEKEKDKEKEKEKEI. Positions 827-841 are enriched in polar residues; that stretch reads NISTSTTPNKKNGTL. The span at 1106–1118 shows a compositional bias: polar residues; sequence GTPTTTSGDNTPL. Composition is skewed to low complexity over residues 1119 to 1182, 1196 to 1221, and 1476 to 1492; these read TNTA…NSSI, EQQQ…QQQP, and SSKV…SPIL. Pro residues predominate over residues 1493–1507; sequence SSPPPPMKQPPPQVI. Positions 1527–1851 constitute a Protein kinase domain; that stretch reads FEIIKPISRG…AYEVKTHPFF (325 aa). ATP contacts are provided by residues 1533 to 1541 and Lys1556; that span reads ISRGAFGRV. The Proton acceptor role is filled by Asp1650. Composition is skewed to low complexity over residues 1687–1729, 1902–1999, and 2006–2052; these read NTNT…SQTN, SQPQ…NINN, and NNNS…QINN. Disordered stretches follow at residues 1687 to 1741 and 1902 to 2070; these read NTNT…KNTL and SQPQ…SKIE. In terms of domain architecture, AGC-kinase C-terminal spans 1852-1911; that stretch reads ANVNWDTLIDQEMDNIFLPKPENNYDTDYFWDRQSMYDDEAEDDFLTINQSQPQHQSQHQ.

This sequence belongs to the protein kinase superfamily. AGC Ser/Thr protein kinase family.

The catalysed reaction is L-seryl-[protein] + ATP = O-phospho-L-seryl-[protein] + ADP + H(+). It carries out the reaction L-threonyl-[protein] + ATP = O-phospho-L-threonyl-[protein] + ADP + H(+). This Dictyostelium discoideum (Social amoeba) protein is Probable serine/threonine-protein kinase DDB_G0272282.